A 539-amino-acid polypeptide reads, in one-letter code: 2,3-bisphosphoglycerate-independent phosphoglycerate mutase (539 aa).

2 residues coordinate Mn(2+): D37 and S86. S86 is a catalytic residue. Residues H147, 177–178, R210, R216, 284–287, and K359 contribute to the substrate site; these read RD and RADR. Positions 426, 430, 467, 468, and 485 each coordinate Mn(2+).

Belongs to the BPG-independent phosphoglycerate mutase family. Mg(2+) is required as a cofactor. The cofactor is Mn(2+). As to expression, expressed ubiquitously. High expression levels in the nerve ring region, intestine and body wall muscles.

It carries out the reaction (2R)-2-phosphoglycerate = (2R)-3-phosphoglycerate. The protein operates within carbohydrate degradation; glycolysis; pyruvate from D-glyceraldehyde 3-phosphate: step 3/5. With respect to regulation, activity is not affected by 2,3-bisphosphoglycerate. In terms of biological role, catalyzes the interconversion of 2-phosphoglycerate and 3-phosphoglycerate. This Caenorhabditis elegans protein is 2,3-bisphosphoglycerate-independent phosphoglycerate mutase.